Consider the following 409-residue polypeptide: Tyrosine--tRNA ligase (409 aa).

An L-tyrosine-binding site is contributed by Tyr-35. The short motif at 40–49 is the 'HIGH' region element; it reads PTGSSLHVGH. L-tyrosine-binding residues include Tyr-168 and Gln-172. Positions 228 to 232 match the 'KMSKS' region motif; the sequence is KMGKT. Lys-231 is a binding site for ATP. Positions 339 to 404 constitute an S4 RNA-binding domain; it reads IKVTDLFVQV…AGKKRVVRIV (66 aa).

The protein belongs to the class-I aminoacyl-tRNA synthetase family. TyrS type 1 subfamily. In terms of assembly, homodimer.

The protein resides in the cytoplasm. The catalysed reaction is tRNA(Tyr) + L-tyrosine + ATP = L-tyrosyl-tRNA(Tyr) + AMP + diphosphate + H(+). Catalyzes the attachment of tyrosine to tRNA(Tyr) in a two-step reaction: tyrosine is first activated by ATP to form Tyr-AMP and then transferred to the acceptor end of tRNA(Tyr). The chain is Tyrosine--tRNA ligase from Treponema pallidum (strain Nichols).